The primary structure comprises 752 residues: Cation-transporting P-type ATPase B (752 aa).

In terms of domain architecture, HMA spans 15 to 78; that stretch reads RRIRLDVLGM…VVEKAGYHAA (64 aa). Cys-26 and Cys-29 together coordinate a metal cation. The next 6 membrane-spanning stretches (helical) occupy residues 105-125, 132-152, 167-187, 201-221, 361-381, and 390-410; these read LLVA…FAIV, GWGY…AWPF, METL…SSVF, AILN…VFVL, IAGV…AAWL, and AFSV…GLAT. The 4-aspartylphosphate intermediate role is filled by Asp-446. The next 2 helical transmembrane spans lie at 491-511 and 714-734; these read MAAA…FVAV and AIPI…AMAF.

The protein belongs to the cation transport ATPase (P-type) (TC 3.A.3) family. Type IB subfamily.

It localises to the cell membrane. It catalyses the reaction ATP + H2O = ADP + phosphate + H(+). This Mycobacterium tuberculosis (strain ATCC 25618 / H37Rv) protein is Cation-transporting P-type ATPase B (ctpB).